Reading from the N-terminus, the 234-residue chain is Zinc transport system ATP-binding protein AdcC (234 aa).

The ABC transporter domain maps to 4-234; that stretch reads ITVEDLSFYY…HENGQEVGHA (231 aa). Residue 36 to 43 coordinates ATP; the sequence is GENGAAKT.

The protein belongs to the ABC transporter superfamily.

In terms of biological role, part of the ATP-driven transport system AdcABC for zinc. Required for transformability. In Streptococcus pneumoniae (strain ATCC BAA-255 / R6), this protein is Zinc transport system ATP-binding protein AdcC (adcC).